The chain runs to 752 residues: Peptidyl-prolyl cis-trans isomerase G (752 aa).

In terms of domain architecture, PPIase cyclophilin-type spans 11 to 176; it reads FFDIAINNQP…AEVRILSCGE (166 aa). Residues 182 to 193 show a composition bias toward basic residues; the sequence is KVKKEEKKRHKS. Residues 182–752 form a disordered region; sequence KVKKEEKKRH…SPGTDEDKSG (571 aa). Residues 194–214 are compositionally biased toward low complexity; the sequence is SSSSSSSDSDSSSDSQSSSES. Over residues 226 to 251 the composition is skewed to basic residues; it reads RKRKKKHRKNSRKHKKEKKKRKKSKK. Ser-252, Ser-254, Ser-255, Ser-257, and Ser-288 each carry phosphoserine. Residues 290–308 show a composition bias toward basic and acidic residues; the sequence is PKADDKERKNREREREREC. Ser-313 is subject to Phosphoserine. The span at 327-345 shows a compositional bias: basic residues; that stretch reads SGRKIKGRGPRRYRTPSRS. Basic and acidic residues-rich tracts occupy residues 346-366 and 377-447; these read RSRD…EMQR and RWIK…DKYN. Ser-354 carries the phosphoserine modification. At Thr-356 the chain carries Phosphothreonine. Ser-384 is subject to Phosphoserine. Residue Lys-390 forms a Glycyl lysine isopeptide (Lys-Gly) (interchain with G-Cter in SUMO2) linkage. Residues Ser-395, Ser-411, and Ser-413 each carry the phosphoserine modification. Basic residues predominate over residues 448–461; it reads KNKVKKRGKSKSRS. Composition is skewed to basic and acidic residues over residues 462–552 and 577–598; these read KSKE…DLTK and RSHD…QEYR. Residues 599-625 show a composition bias toward basic residues; sequence RRGRSRSRDRRTPGRSRSKDRRRRRRD. Basic and acidic residues predominate over residues 626 to 684; it reads SRSSEREESQSRNKDKYRSQESKSSHRKENSEGEKRTYSKSRDHNSSSNNREKKADREQ. Residues Ser-685 and Ser-688 each carry the phosphoserine modification. Residues 685–705 show a composition bias toward polar residues; the sequence is SPVSKTKQSSQDNEVKSSTLK. Lys-691 is covalently cross-linked (Glycyl lysine isopeptide (Lys-Gly) (interchain with G-Cter in SUMO2)). 3 positions are modified to phosphoserine: Ser-694, Ser-742, and Ser-743. Residues 706–752 show a composition bias toward basic and acidic residues; it reads NQEDEKTRSPVEKENQKSKGQENDHVHDKNKKCDHESSPGTDEDKSG. Thr-746 is subject to Phosphothreonine. Position 751 is a phosphoserine (Ser-751).

Interacts with CLK1, PNN and with the phosphorylated C-terminal domain of RNA polymerase II.

The protein resides in the nucleus matrix. The protein localises to the nucleus speckle. The catalysed reaction is [protein]-peptidylproline (omega=180) = [protein]-peptidylproline (omega=0). With respect to regulation, inhibited by cyclosporin A (CsA). In terms of biological role, PPIase that catalyzes the cis-trans isomerization of proline imidic peptide bonds in oligopeptides and may therefore assist protein folding. May be implicated in the folding, transport, and assembly of proteins. May play an important role in the regulation of pre-mRNA splicing. This Mus musculus (Mouse) protein is Peptidyl-prolyl cis-trans isomerase G (Ppig).